The sequence spans 194 residues: MASENGDKLELAFSAVPDPKPKKDWVILSLRVVAFFATASATLVMAFNKQTKGMVVATIGTNPVTITLTAMFQHTPAFIFFVIVNAIASFYNLLVIGVEILGPQYDYKGLRLGLIAILDVMTMALAATGDGAATFMAELGRNGNSHARWDKICDKFEAYCNRGGVALVASFVGLILLLVVTVMSITKLLKLNRI.

Over 1-24 (MASENGDKLELAFSAVPDPKPKKD) the chain is Cytoplasmic. Residues 25–45 (WVILSLRVVAFFATASATLVM) form a helical membrane-spanning segment. The Extracellular segment spans residues 46–77 (AFNKQTKGMVVATIGTNPVTITLTAMFQHTPA). The helical transmembrane segment at 78–98 (FIFFVIVNAIASFYNLLVIGV) threads the bilayer. Residues 99–111 (EILGPQYDYKGLR) are Cytoplasmic-facing. The chain crosses the membrane as a helical span at residues 112–132 (LGLIAILDVMTMALAATGDGA). Topologically, residues 133–164 (ATFMAELGRNGNSHARWDKICDKFEAYCNRGG) are extracellular. Residues 165–185 (VALVASFVGLILLLVVTVMSI) form a helical membrane-spanning segment. At 186–194 (TKLLKLNRI) the chain is on the cytoplasmic side.

This sequence belongs to the Casparian strip membrane proteins (CASP) family. In terms of assembly, homodimer and heterodimers.

The protein resides in the cell membrane. The protein is CASP-like protein 1B1 of Glycine max (Soybean).